Reading from the N-terminus, the 144-residue chain is Peptide methionine sulfoxide reductase MsrB (144 aa).

The region spanning 5–128 (KEELRQRIGE…NSAALQFIPV (124 aa)) is the MsrB domain. The active-site Nucleophile is Cys117.

This sequence belongs to the MsrB Met sulfoxide reductase family.

The catalysed reaction is L-methionyl-[protein] + [thioredoxin]-disulfide + H2O = L-methionyl-(R)-S-oxide-[protein] + [thioredoxin]-dithiol. This Ligilactobacillus salivarius (strain UCC118) (Lactobacillus salivarius) protein is Peptide methionine sulfoxide reductase MsrB.